The sequence spans 1939 residues: Myosin-1 (1939 aa).

The Myosin N-terminal SH3-like domain maps to 33–82; that stretch reads DAKTSVFVVDPKESFVKATVQSREGGKVTAKTEAGATVTVKDDQVFPMNP. 2 positions are modified to phosphothreonine: Thr64 and Thr69. A Myosin motor domain is found at 86-782; that stretch reads DKIEDMAMMT…LLGLLEEMRD (697 aa). Lys130 bears the N6,N6,N6-trimethyllysine mark. 179–186 provides a ligand contact to ATP; that stretch reads GESGAGKT. Residue Tyr389 is modified to Phosphotyrosine. Phosphothreonine is present on Thr419. Position 424 is a phosphotyrosine (Tyr424). The tract at residues 659–681 is actin-binding; sequence LNKLMTNLRSTHPHFVRCIIPNE. The residue at position 757 (His757) is a Pros-methylhistidine. Residues 761–775 form an actin-binding region; the sequence is KFGHTKVFFKAGLLG. The IQ domain occupies 785 to 814; that stretch reads LAQLITRTQAMCRGFLARVEYQKMVERRES. The stretch at 843–1939 forms a coiled coil; it reads LLKSAETEKE…EVHTKIISEE (1097 aa). Ser1092, Ser1096, Ser1162, and Ser1237 each carry phosphoserine. Thr1241 carries the post-translational modification Phosphothreonine. A phosphoserine mark is found at Ser1243 and Ser1261. 2 positions are modified to phosphothreonine: Thr1265 and Thr1286. Phosphoserine occurs at positions 1288, 1292, 1303, and 1306. Thr1467 is subject to Phosphothreonine. Residue Ser1474 is modified to Phosphoserine. Tyr1492 is subject to Phosphotyrosine. Ser1495 carries the post-translational modification Phosphoserine. Thr1501 is modified (phosphothreonine). Phosphoserine is present on Ser1514. The residue at position 1517 (Thr1517) is a Phosphothreonine. Ser1542, Ser1554, Ser1574, Ser1600, Ser1603, Ser1714, and Ser1726 each carry phosphoserine. Thr1730 and Thr1736 each carry phosphothreonine. Ser1739 carries the phosphoserine modification.

Belongs to the TRAFAC class myosin-kinesin ATPase superfamily. Myosin family. As to quaternary structure, muscle myosin is a hexameric protein that consists of 2 heavy chain subunits (MHC), 2 alkali light chain subunits (MLC) and 2 regulatory light chain subunits (MLC-2). Interacts with SLC26A5.

It is found in the cytoplasm. It localises to the myofibril. In terms of biological role, required for normal hearing. It plays a role in cochlear amplification of auditory stimuli, likely through the positive regulation of prestin (SLC26A5) activity and outer hair cell (OHC) electromotility. The chain is Myosin-1 from Homo sapiens (Human).